A 547-amino-acid polypeptide reads, in one-letter code: Chaperonin GroEL 1 (547 aa).

Residues Thr-30–Pro-33, Lys-51, Asp-87–Thr-91, Gly-415, and Asp-496 contribute to the ATP site.

This sequence belongs to the chaperonin (HSP60) family. Forms a cylinder of 14 subunits composed of two heptameric rings stacked back-to-back. Interacts with the co-chaperonin GroES.

It is found in the cytoplasm. It carries out the reaction ATP + H2O + a folded polypeptide = ADP + phosphate + an unfolded polypeptide.. Its function is as follows. Together with its co-chaperonin GroES, plays an essential role in assisting protein folding. The GroEL-GroES system forms a nano-cage that allows encapsulation of the non-native substrate proteins and provides a physical environment optimized to promote and accelerate protein folding. In Rhodopseudomonas palustris (strain ATCC BAA-98 / CGA009), this protein is Chaperonin GroEL 1.